Reading from the N-terminus, the 177-residue chain is tRNA (cytidine(56)-2'-O)-methyltransferase (177 aa).

S-adenosyl-L-methionine is bound by residues Leu-84 and 109–113; that span reads GAEKV.

The protein belongs to the aTrm56 family. As to quaternary structure, homodimer.

It is found in the cytoplasm. It carries out the reaction cytidine(56) in tRNA + S-adenosyl-L-methionine = 2'-O-methylcytidine(56) in tRNA + S-adenosyl-L-homocysteine + H(+). Its function is as follows. Specifically catalyzes the AdoMet-dependent 2'-O-ribose methylation of cytidine at position 56 in tRNAs. The sequence is that of tRNA (cytidine(56)-2'-O)-methyltransferase from Methanosarcina mazei (strain ATCC BAA-159 / DSM 3647 / Goe1 / Go1 / JCM 11833 / OCM 88) (Methanosarcina frisia).